The sequence spans 197 residues: Transposon Tn10 TetC protein (197 aa).

The HTH tetR-type domain maps to 12–72 (KSTYQSLVNS…ACYKQQLIMI (61 aa)). The segment at residues 35 to 54 (SIDEISGKALVTKGAFYHHF) is a DNA-binding region (H-T-H motif).

The protein is Transposon Tn10 TetC protein (tetC) of Escherichia coli.